The sequence spans 370 residues: MAPMSETLVVKIGTSSLTNPHHPGLALSTIAGLVEVICQLRRQGYNVVLVSSGAVGVGCTRLGLRDRPSRIAQRQAIAAVGQGRLMRTYDDLFTTLGQPIAQVLLTRGDLAQRQRYINAYQTFQELFELGVVPIVNENDTVAVEELKFGDNDTLSALVASLVEAQWLFLLTDVDRLYTADPRQDPNAKPITIVHDLSELESIQAGGQGSRWGTGGMATKLTAAKIATQASVRTVITQGRSPENLLKILAGEAIGTWFEPQPETVNARKRWIAHGLVPTGKLLLDAGAVQAIQAGGKSLLAAGIQAIEGDFEAQDAVQLCDLNGTEIARGLVNYDSHELQQIRGCQSDQIVQILGYEGAETIVHRDNLVLS.

Lysine 11 contacts ATP. Substrate-binding residues include serine 52, aspartate 139, and asparagine 151. ATP-binding positions include 171 to 172 and 213 to 219; these read TD and TGGMATK. Residues 278-356 form the PUA domain; sequence TGKLLLDAGA…DQIVQILGYE (79 aa).

The protein belongs to the glutamate 5-kinase family.

Its subcellular location is the cytoplasm. The enzyme catalyses L-glutamate + ATP = L-glutamyl 5-phosphate + ADP. It functions in the pathway amino-acid biosynthesis; L-proline biosynthesis; L-glutamate 5-semialdehyde from L-glutamate: step 1/2. Functionally, catalyzes the transfer of a phosphate group to glutamate to form L-glutamate 5-phosphate. In Synechococcus sp. (strain ATCC 27144 / PCC 6301 / SAUG 1402/1) (Anacystis nidulans), this protein is Glutamate 5-kinase.